A 268-amino-acid polypeptide reads, in one-letter code: Putative carbamate hydrolase RutD (268 aa).

In terms of domain architecture, AB hydrolase-1 spans 24–243 (VILSAGLGGS…NATLDIAPWG (220 aa)).

Belongs to the AB hydrolase superfamily. Hydrolase RutD family.

It carries out the reaction carbamate + 2 H(+) = NH4(+) + CO2. Functionally, involved in pyrimidine catabolism. May facilitate the hydrolysis of carbamate, a reaction that can also occur spontaneously. In Caulobacter sp. (strain K31), this protein is Putative carbamate hydrolase RutD.